We begin with the raw amino-acid sequence, 727 residues long: DNA ligase (727 aa).

NAD(+) contacts are provided by residues 71-75 (DGEFD), 120-121 (SL), and Glu-150. Lys-152 serves as the catalytic N6-AMP-lysine intermediate. The NAD(+) site is built by Arg-173, Glu-213, Lys-329, and Lys-353. Zn(2+)-binding residues include Cys-447, Cys-450, Cys-466, and Cys-472. The region spanning 636-725 (SIERHLTGLS…PEAAAEAALP (90 aa)) is the BRCT domain.

This sequence belongs to the NAD-dependent DNA ligase family. LigA subfamily. Requires Mg(2+) as cofactor. It depends on Mn(2+) as a cofactor.

The enzyme catalyses NAD(+) + (deoxyribonucleotide)n-3'-hydroxyl + 5'-phospho-(deoxyribonucleotide)m = (deoxyribonucleotide)n+m + AMP + beta-nicotinamide D-nucleotide.. DNA ligase that catalyzes the formation of phosphodiester linkages between 5'-phosphoryl and 3'-hydroxyl groups in double-stranded DNA using NAD as a coenzyme and as the energy source for the reaction. It is essential for DNA replication and repair of damaged DNA. In Saccharopolyspora erythraea (strain ATCC 11635 / DSM 40517 / JCM 4748 / NBRC 13426 / NCIMB 8594 / NRRL 2338), this protein is DNA ligase.